A 442-amino-acid polypeptide reads, in one-letter code: DNA topoisomerase 6 subunit A3 (442 aa).

The interval 1-34 (MSEKKRRGGAGAGAASGSASKKPRVSTAASYAES) is disordered. Residues 91-224 (QDSASVTSRI…LHVVASEKGV (134 aa)) enclose the Topo IIA-type catalytic domain. Tyr185 acts as the O-(5'-phospho-DNA)-tyrosine intermediate in catalysis. Mg(2+) contacts are provided by Glu271 and Asp323.

The protein belongs to the TOP6A family. In terms of assembly, homodimer. Heterotetramer of two TOP6A and two TOP6B subunits. Interacts with TOP6B. Mg(2+) serves as cofactor. In terms of tissue distribution, highly expressed in flowers before pollination. Expressed in roots and shoots.

The protein resides in the nucleus. The catalysed reaction is ATP-dependent breakage, passage and rejoining of double-stranded DNA.. Component of the DNA topoisomerase VI involved in chromatin organization and progression of endoreduplication cycles. Relaxes both positive and negative superturns and exhibits a strong decatenase activity. May be involved in cell proliferation and stress tolerance. This chain is DNA topoisomerase 6 subunit A3, found in Oryza sativa subsp. indica (Rice).